We begin with the raw amino-acid sequence, 338 residues long: Malate dehydrogenase, mitochondrial (338 aa).

The N-terminal 24 residues, 1–24 (MLSALARPVGAALRRSFSTSAQNN), are a transit peptide targeting the mitochondrion. Residues 31–37 (GASGGIG) and Asp-57 each bind NAD(+). An O-linked (GlcNAc) serine glycan is attached at Ser-33. Lys-78 and Lys-91 each carry N6-acetyllysine; alternate. An N6-succinyllysine; alternate mark is found at Lys-78 and Lys-91. Substrate is bound by residues Arg-104 and Arg-110. NAD(+)-binding positions include Asn-117 and 140 to 142 (ISN). Asn-142 is a substrate binding site. N6-acetyllysine is present on Lys-165. Residue Arg-176 participates in substrate binding. Lys-185 carries the post-translational modification N6-acetyllysine; alternate. Position 185 is an N6-succinyllysine; alternate (Lys-185). His-200 functions as the Proton acceptor in the catalytic mechanism. Lys-203 carries the N6-succinyllysine modification. N6-acetyllysine; alternate occurs at positions 215 and 239. Residues Lys-215 and Lys-239 each carry the N6-succinyllysine; alternate modification. Lys-239 bears the N6-malonyllysine; alternate mark. A Phosphoserine modification is found at Ser-246. NAD(+) is bound at residue Met-251. N6-succinyllysine is present on Lys-269. An N6-acetyllysine; alternate mark is found at Lys-296, Lys-301, Lys-307, Lys-314, and Lys-324. Lys-296, Lys-301, Lys-307, Lys-314, and Lys-324 each carry N6-succinyllysine; alternate. The residue at position 307 (Lys-307) is an N6-malonyllysine; alternate. A Phosphoserine modification is found at Ser-326. N6-acetyllysine; alternate is present on residues Lys-328, Lys-329, and Lys-335. The residue at position 328 (Lys-328) is an N6-succinyllysine; alternate. At Lys-329 the chain carries N6-malonyllysine; alternate. Lys-335 carries the N6-succinyllysine; alternate modification.

This sequence belongs to the LDH/MDH superfamily. MDH type 1 family. Homodimer. Post-translationally, acetylation is enhanced after treatment either with trichostin A (TCA) or with nicotinamide (NAM) with the appearance of tri- and tetraacetylations. Glucose also increases acetylation. In terms of tissue distribution, expressed in flagella of epididymal sperm.

It is found in the mitochondrion matrix. The enzyme catalyses (S)-malate + NAD(+) = oxaloacetate + NADH + H(+). Its activity is regulated as follows. Enzyme activity is enhanced by acetylation. The chain is Malate dehydrogenase, mitochondrial (Mdh2) from Rattus norvegicus (Rat).